Consider the following 483-residue polypeptide: SET domain and MYND-type zinc finger protein 6 (483 aa).

Residues 4 to 228 (PLIASVILPE…KDEQLFISYI (225 aa)) enclose the SET domain. Residues C49, C52, C62, C65, C71, C75, H83, and C87 each contribute to the Zn(2+) site. The segment at 49–87 (CSTCTEEKVKTQRCAACKIIHYCSKGCQKADWPFHKLEC) adopts an MYND-type zinc-finger fold.

This sequence belongs to the class V-like SAM-binding methyltransferase superfamily.

It is found in the cytoplasm. It localises to the nucleus. This chain is SET domain and MYND-type zinc finger protein 6 (set6), found in Schizosaccharomyces pombe (strain 972 / ATCC 24843) (Fission yeast).